Reading from the N-terminus, the 214-residue chain is Soluble inorganic pyrophosphatase (214 aa).

Substrate is bound by residues lysine 64, arginine 78, and tyrosine 90. Mg(2+)-binding residues include aspartate 100, aspartate 105, and aspartate 137. Substrate is bound at residue tyrosine 174.

The protein belongs to the PPase family. It depends on Mg(2+) as a cofactor.

The protein resides in the cytoplasm. The catalysed reaction is diphosphate + H2O = 2 phosphate + H(+). The polypeptide is Soluble inorganic pyrophosphatase (IPP) (Oryza sativa subsp. indica (Rice)).